Consider the following 318-residue polypeptide: Biotin synthase (318 aa).

Positions 36–258 constitute a Radical SAM core domain; that stretch reads HDPREVQLCT…VATTRILFPD (223 aa). [4Fe-4S] cluster-binding residues include Cys54, Cys58, and Cys61. 4 residues coordinate [2Fe-2S] cluster: Cys98, Cys130, Cys190, and Arg262.

This sequence belongs to the radical SAM superfamily. Biotin synthase family. In terms of assembly, homodimer. [4Fe-4S] cluster serves as cofactor. The cofactor is [2Fe-2S] cluster.

The enzyme catalyses (4R,5S)-dethiobiotin + (sulfur carrier)-SH + 2 reduced [2Fe-2S]-[ferredoxin] + 2 S-adenosyl-L-methionine = (sulfur carrier)-H + biotin + 2 5'-deoxyadenosine + 2 L-methionine + 2 oxidized [2Fe-2S]-[ferredoxin]. Its pathway is cofactor biosynthesis; biotin biosynthesis; biotin from 7,8-diaminononanoate: step 2/2. Functionally, catalyzes the conversion of dethiobiotin (DTB) to biotin by the insertion of a sulfur atom into dethiobiotin via a radical-based mechanism. This Gloeobacter violaceus (strain ATCC 29082 / PCC 7421) protein is Biotin synthase.